We begin with the raw amino-acid sequence, 159 residues long: Nudix hydrolase DR_1025 (159 aa).

3 residues coordinate Mg(2+): methionine 1, arginine 14, and serine 49. 1–6 (MEHDER) contacts ATP. Residues 11 to 144 (VELRAAGVVL…QIRMYQTKLF (134 aa)) enclose the Nudix hydrolase domain. An ATP-binding site is contributed by 50-51 (GA). The Nudix box signature appears at 50 to 71 (GAVEDGENPQDAAVREACEETG). Residues glutamate 53 and glutamate 65 each coordinate Mg(2+). Residue 87-89 (FPD) participates in ATP binding. A Mg(2+)-binding site is contributed by arginine 95.

This sequence belongs to the Nudix hydrolase family. Homodimer. Mg(2+) is required as a cofactor.

It carries out the reaction 8-oxo-dGTP + H2O = 8-oxo-dGDP + phosphate + H(+). The enzyme catalyses 8-oxo-GTP + H2O = 8-oxo-GDP + phosphate + H(+). It catalyses the reaction P(1),P(4)-bis(5'-adenosyl) tetraphosphate + H2O = AMP + ATP + 2 H(+). Hydrolase that can act as a nucleoside triphosphatase and a dinucleoside polyphosphate pyrophosphatase. The best substrates are 8-oxo-dGTP and 8-oxo-GTP. Other substrates include Ap4A, dGTP and GTP. May be involved in protection from damage caused by radiation. The sequence is that of Nudix hydrolase DR_1025 from Deinococcus radiodurans (strain ATCC 13939 / DSM 20539 / JCM 16871 / CCUG 27074 / LMG 4051 / NBRC 15346 / NCIMB 9279 / VKM B-1422 / R1).